The primary structure comprises 157 residues: Transcription elongation factor GreA (157 aa).

Residues L9 to I30 adopt a coiled-coil conformation.

This sequence belongs to the GreA/GreB family.

Its function is as follows. Necessary for efficient RNA polymerase transcription elongation past template-encoded arresting sites. The arresting sites in DNA have the property of trapping a certain fraction of elongating RNA polymerases that pass through, resulting in locked ternary complexes. Cleavage of the nascent transcript by cleavage factors such as GreA or GreB allows the resumption of elongation from the new 3'terminus. GreA releases sequences of 2 to 3 nucleotides. This Magnetococcus marinus (strain ATCC BAA-1437 / JCM 17883 / MC-1) protein is Transcription elongation factor GreA.